The primary structure comprises 1489 residues: FERM domain-containing protein C (1489 aa).

2 stretches are compositionally biased toward polar residues: residues Asp-59 to Ser-79 and Asn-103 to Ile-118. 4 disordered regions span residues Asp-59 to Leu-86, Asn-103 to Leu-197, Asn-252 to Asn-271, and Glu-277 to Ser-312. Over residues Ser-131–Glu-153 the composition is skewed to low complexity. The segment covering His-163–Lys-172 has biased composition (basic residues). Low complexity predominate over residues Phe-181–Ser-195. Residues Ala-202–His-289 adopt a coiled-coil conformation. The span at Glu-277 to Gln-287 shows a compositional bias: low complexity. Over residues Arg-303–Ser-312 the composition is skewed to polar residues. Positions Ile-356 to Arg-383 form a coiled coil. Disordered regions lie at residues Asn-396–Asn-435, Val-459–Thr-479, and Glu-508–Thr-569. Low complexity predominate over residues Glu-421–Asn-435. A compositionally biased stretch (polar residues) spans Thr-545–Gln-555. The span at Ala-556 to Thr-569 shows a compositional bias: low complexity. The FERM domain maps to Ile-637–Glu-934. LRR repeat units follow at residues Lys-1017–Thr-1040, Glu-1053–Pro-1075, His-1087–Tyr-1110, Pro-1111–Arg-1133, Asn-1167–Gly-1191, Ser-1196–Lys-1219, Ser-1254–Gly-1278, Asn-1282–Ser-1306, Asn-1339–Thr-1362, Asn-1367–Gly-1391, Asn-1395–Asn-1418, Val-1428–Thr-1450, and Asn-1451–Ala-1474.

In Dictyostelium discoideum (Social amoeba), this protein is FERM domain-containing protein C (frmC).